We begin with the raw amino-acid sequence, 201 residues long: Ribonuclease HII (201 aa).

An RNase H type-2 domain is found at 12–201; it reads DLVAGVDEVG…VRELLDVSVQ (190 aa). A divalent metal cation contacts are provided by D18, E19, and D110.

The protein belongs to the RNase HII family. Mn(2+) is required as a cofactor. The cofactor is Mg(2+).

It is found in the cytoplasm. The enzyme catalyses Endonucleolytic cleavage to 5'-phosphomonoester.. Its function is as follows. Endonuclease that specifically degrades the RNA of RNA-DNA hybrids. This Pseudomonas aeruginosa (strain ATCC 15692 / DSM 22644 / CIP 104116 / JCM 14847 / LMG 12228 / 1C / PRS 101 / PAO1) protein is Ribonuclease HII.